The sequence spans 301 residues: Protoheme IX farnesyltransferase (301 aa).

9 helical membrane-spanning segments follow: residues Val16–Pro36, Ile41–Ile61, Val93–Ile113, Thr114–Lys134, Ile141–Gly161, Ser172–Phe192, Gln217–Met237, Ser238–Trp258, and Phe273–Leu293.

Belongs to the UbiA prenyltransferase family. Protoheme IX farnesyltransferase subfamily.

It is found in the cell inner membrane. The enzyme catalyses heme b + (2E,6E)-farnesyl diphosphate + H2O = Fe(II)-heme o + diphosphate. The protein operates within porphyrin-containing compound metabolism; heme O biosynthesis; heme O from protoheme: step 1/1. In terms of biological role, converts heme B (protoheme IX) to heme O by substitution of the vinyl group on carbon 2 of heme B porphyrin ring with a hydroxyethyl farnesyl side group. This is Protoheme IX farnesyltransferase from Xylella fastidiosa (strain Temecula1 / ATCC 700964).